A 488-amino-acid chain; its full sequence is Ribulose bisphosphate carboxylase large chain (488 aa).

Positions 127 and 177 each coordinate substrate. The active-site Proton acceptor is Lys179. Lys181 contributes to the substrate binding site. The Mg(2+) site is built by Lys205, Asp207, and Glu208. Position 205 is an N6-carboxylysine (Lys205). His297 (proton acceptor) is an active-site residue. 3 residues coordinate substrate: Arg298, His330, and Ser382.

Belongs to the RuBisCO large chain family. Type I subfamily. As to quaternary structure, heterohexadecamer of 8 large chains and 8 small chains. Requires Mg(2+) as cofactor.

It localises to the plastid. The protein localises to the chloroplast. It carries out the reaction 2 (2R)-3-phosphoglycerate + 2 H(+) = D-ribulose 1,5-bisphosphate + CO2 + H2O. The catalysed reaction is D-ribulose 1,5-bisphosphate + O2 = 2-phosphoglycolate + (2R)-3-phosphoglycerate + 2 H(+). In terms of biological role, ruBisCO catalyzes two reactions: the carboxylation of D-ribulose 1,5-bisphosphate, the primary event in carbon dioxide fixation, as well as the oxidative fragmentation of the pentose substrate in the photorespiration process. Both reactions occur simultaneously and in competition at the same active site. The sequence is that of Ribulose bisphosphate carboxylase large chain (rbcL) from Pyropia dentata (Red alga).